Here is a 201-residue protein sequence, read N- to C-terminus: Probable molybdenum cofactor guanylyltransferase (201 aa).

Residues 16–18 (LAG), Lys-28, Asp-75, and Asp-107 contribute to the GTP site. Mg(2+) is bound at residue Asp-107.

Belongs to the MobA family. The cofactor is Mg(2+).

It is found in the cytoplasm. It catalyses the reaction Mo-molybdopterin + GTP + H(+) = Mo-molybdopterin guanine dinucleotide + diphosphate. Transfers a GMP moiety from GTP to Mo-molybdopterin (Mo-MPT) cofactor (Moco or molybdenum cofactor) to form Mo-molybdopterin guanine dinucleotide (Mo-MGD) cofactor. The protein is Probable molybdenum cofactor guanylyltransferase of Mycobacterium ulcerans (strain Agy99).